A 78-amino-acid polypeptide reads, in one-letter code: Large ribosomal subunit protein bL28 (78 aa).

Positions 1 to 21 are disordered; the sequence is MSRVCQVTGKKPMVGNNRSHA.

Belongs to the bacterial ribosomal protein bL28 family.

This Shewanella piezotolerans (strain WP3 / JCM 13877) protein is Large ribosomal subunit protein bL28.